The following is a 738-amino-acid chain: Isocitrate dehydrogenase [NADP] (738 aa).

Residues Asn-83 and Ser-85 each coordinate NADP(+). D-threo-isocitrate is bound by residues Ser-130, Asn-133, Arg-137, Arg-143, and Lys-253. Asn-133 lines the NADP(+) pocket. A Mg(2+)-binding site is contributed by Asp-346. 2 residues coordinate D-threo-isocitrate: Tyr-416 and Arg-543. Mg(2+) contacts are provided by Asp-544 and Asp-548. NADP(+)-binding residues include Gly-580, His-585, Arg-596, Asp-598, and Arg-645.

Belongs to the monomeric-type IDH family. As to quaternary structure, monomer. Mg(2+) serves as cofactor. It depends on Mn(2+) as a cofactor.

It is found in the cytoplasm. The enzyme catalyses D-threo-isocitrate + NADP(+) = 2-oxoglutarate + CO2 + NADPH. With respect to regulation, weakly inhibited by oxaloacetate, 2-oxoglutarate and citrate. Severely inhibited by oxaloacetate plus glyoxylate. Catalyzes the oxidative decarboxylation of isocitrate to 2-oxoglutarate and carbon dioxide with the concomitant reduction of NADP(+). Cannot use NAD(+). This Corynebacterium glutamicum (strain ATCC 13032 / DSM 20300 / JCM 1318 / BCRC 11384 / CCUG 27702 / LMG 3730 / NBRC 12168 / NCIMB 10025 / NRRL B-2784 / 534) protein is Isocitrate dehydrogenase [NADP].